We begin with the raw amino-acid sequence, 308 residues long: Ferredoxin--NADP reductase (308 aa).

Residues Glu26, Gln34, Tyr39, Val77, Phe106, Asp266, and Thr306 each contribute to the FAD site.

It belongs to the ferredoxin--NADP reductase type 2 family. In terms of assembly, homodimer. It depends on FAD as a cofactor.

The catalysed reaction is 2 reduced [2Fe-2S]-[ferredoxin] + NADP(+) + H(+) = 2 oxidized [2Fe-2S]-[ferredoxin] + NADPH. This is Ferredoxin--NADP reductase from Lactobacillus delbrueckii subsp. bulgaricus (strain ATCC 11842 / DSM 20081 / BCRC 10696 / JCM 1002 / NBRC 13953 / NCIMB 11778 / NCTC 12712 / WDCM 00102 / Lb 14).